Here is a 1972-residue protein sequence, read N- to C-terminus: TP53-binding protein 1 (1972 aa).

3 disordered regions span residues 24-273 (DSQP…VAAM), 290-332 (QIQK…CSLA), and 346-507 (GQRS…LGLS). 2 positions are modified to phosphoserine: S25 and S63. Positions 82-91 (EHLKENKVAD) are enriched in basic and acidic residues. Residues 94 to 121 (DSSNLDTCGSISQVIEQLPQPNRTSSVL) show a composition bias toward polar residues. 2 positions are modified to phosphoserine: S105 and S124. A compositionally biased stretch (basic and acidic residues) spans 138 to 149 (ELEQKEKEKEED). Residues 151-168 (SGNTTHSLGAEDTASSQL) show a composition bias toward polar residues. Phosphoserine occurs at positions 166, 176, and 178. Residues 195-205 (LQSVTTNSGYT) show a composition bias toward polar residues. K217 participates in a covalent cross-link: Glycyl lysine isopeptide (Lys-Gly) (interchain with G-Cter in SUMO1); alternate. K217 participates in a covalent cross-link: Glycyl lysine isopeptide (Lys-Gly) (interchain with G-Cter in SUMO2); alternate. Phosphoserine is present on residues S222, S265, and S294. 2 stretches are compositionally biased toward polar residues: residues 300-322 (LSTQ…CSTP) and 346-361 (GQRS…NSSD). T302 is modified (phosphothreonine). Residues S366, S380, S395, S398, S429, S452, and S464 each carry the phosphoserine modification. Residues 426 to 441 (STVSPQASTPISQSTP) show a composition bias toward polar residues. The segment covering 442–452 (VFPPGSLPIPS) has biased composition (pro residues). Residues 481–490 (HSSSLTVECS) show a composition bias toward polar residues. Over residues 491-501 (KTSEIEPKNSP) the composition is skewed to basic and acidic residues. Residues S500, S507, S518, S523, and S525 each carry the phosphoserine modification. Polar residues predominate over residues 520 to 531 (SEYSQSPKMESL). Residues 520–556 (SEYSQSPKMESLSSHRIDEDGENTQIEDTEPMSPVLN) are disordered. Positions 538 to 549 (EDGENTQIEDTE) are enriched in acidic residues. Phosphothreonine occurs at positions 543 and 548. Phosphoserine is present on residues S552, S566, and S580. The segment at 568-595 (LMNPAQDGEVQLSQNDDKTKGDDTDTRD) is disordered. Over residues 582–595 (NDDKTKGDDTDTRD) the composition is skewed to basic and acidic residues. 4 positions are modified to phosphoserine: S630, S635, S639, and S640. Positions 649 to 687 (EIKEHHPEEGSSGSEVEEIPETPCESQGEELKEENMESV) are disordered. At T670 the chain carries Phosphothreonine. A phosphoserine mark is found at S692, S724, S727, S771, S809, S830, S831, and S834. Residues 742–911 (EQEAWEEATS…TPFHFTLPKE (170 aa)) are disordered. Positions 798-816 (AENRLDTKEEKSVEYEGDL) are enriched in basic and acidic residues. Positions 839–848 (RADDPLRLDQ) are enriched in basic and acidic residues. Over residues 849-864 (ELQQPQTQEKTSNSLT) the composition is skewed to polar residues. Position 855 is a phosphothreonine (T855). A Glycyl lysine isopeptide (Lys-Gly) (interchain with G-Cter in SUMO1); alternate cross-link involves residue K868. A Glycyl lysine isopeptide (Lys-Gly) (interchain with G-Cter in SUMO2); alternate cross-link involves residue K868. A compositionally biased stretch (polar residues) spans 890–902 (HASQSFCESSSET). At T922 the chain carries Phosphothreonine. K930 participates in a covalent cross-link: Glycyl lysine isopeptide (Lys-Gly) (interchain with G-Cter in SUMO2). Phosphoserine occurs at positions 970 and 975. Residue K984 forms a Glycyl lysine isopeptide (Lys-Gly) (interchain with G-Cter in SUMO2) linkage. Disordered regions lie at residues 997–1028 (EASE…SVAS) and 1045–1103 (ENEA…VSPA). Positions 1018–1028 (GSTAVAESVAS) are enriched in polar residues. The residue at position 1028 (S1028) is a Phosphoserine. Position 1056 is a phosphothreonine (T1056). Position 1068 is a phosphoserine (S1068). A compositionally biased stretch (basic and acidic residues) spans 1071-1083 (EEEKEKLEGDHTI). Residues S1086, S1094, S1101, and S1114 each carry the phosphoserine modification. Positions 1127–1139 (DQKEGRSTNKENP) are enriched in basic and acidic residues. Disordered stretches follow at residues 1127-1148 (DQKE…ERPS), 1188-1232 (NFGK…QPPH), and 1269-1478 (VTEE…DGLD). The residue at position 1148 (S1148) is a Phosphoserine. The segment covering 1188–1200 (NFGKQDATVQTER) has biased composition (polar residues). A Phosphothreonine modification is found at T1214. Phosphoserine occurs at positions 1216 and 1219. Acidic residues predominate over residues 1272 to 1285 (ETEEPIVECQECET). Low complexity-rich tracts occupy residues 1298–1307 (DLGDISSFSS) and 1316–1329 (SSGT…SSGS). 2 positions are modified to phosphoserine: S1317 and S1342. At R1355 the chain carries Omega-N-methylarginine. A Phosphoserine modification is found at S1362. A Glycyl lysine isopeptide (Lys-Gly) (interchain with G-Cter in SUMO2) cross-link involves residue K1365. A Phosphoserine modification is found at S1368. The residue at position 1372 (T1372) is a Phosphothreonine. The GAR motif lies at 1396 to 1403 (RGRGRRGR). Phosphoserine occurs at positions 1426 and 1430. K1434 is covalently cross-linked (Glycyl lysine isopeptide (Lys-Gly) (interchain with G-Cter in SUMO1); alternate). Residue K1434 forms a Glycyl lysine isopeptide (Lys-Gly) (interchain with G-Cter in SUMO2); alternate linkage. A phosphoserine mark is found at S1460, S1462, and S1474. Residues 1484–1603 (NSFVGLRVVA…NRLREQYGLG (120 aa)) are tudor-like. Residues 1495–1523 (WSSNGYFYSGKITRDVGAGKYKLLFDDGY) are interaction with dimethylated histone H4. K1563 is covalently cross-linked (Glycyl lysine isopeptide (Lys-Gly) (interchain with G-Cter in SUMO1); alternate). A Glycyl lysine isopeptide (Lys-Gly) (interchain with G-Cter in SUMO2); alternate cross-link involves residue K1563. The UDR motif lies at 1604–1631 (PYEAVTPLTKAADISLDNLVEGKRKRRS). The residue at position 1609 (T1609) is a Phosphothreonine. 3 positions are modified to phosphoserine: S1618, S1631, and S1635. 2 disordered regions span residues 1622–1719 (LVEG…EEQR) and 1745–1768 (LASR…FLEI). The segment covering 1634–1650 (SSPATPTASSSSSTTPT) has biased composition (low complexity). T1638 and T1648 each carry phosphothreonine. Residues S1656, S1673, and S1678 each carry the phosphoserine modification. Residue K1685 forms a Glycyl lysine isopeptide (Lys-Gly) (interchain with G-Cter in ubiquitin) linkage. S1701, S1759, and S1778 each carry phosphoserine. BRCT domains follow at residues 1724–1848 (LNKT…NYLL) and 1864–1964 (PREN…QHPK).

Homoligomer. Interacts with p53/TP53 (via the central domain). Interacts with DCLRE1C. Interacts with histone H2AX and this requires phosphorylation of H2AX on 'Ser-139'. Interacts with histone H4 that has been dimethylated at 'Lys-20' (H4K20me2). Has low affinity for histone H4 containing monomethylated 'Lys-20' (H4K20me1). Does not bind histone H4 containing unmethylated or trimethylated 'Lys-20' (H4K20me3). Has low affinity for histone H3 that has been dimethylated on 'Lys-79'. Has very low affinity for histone H3 that has been monomethylated on 'Lys-79' (in vitro). Does not bind unmethylated histone H3. Interacts with histone H2A monoubiquitinated at 'Lys-15' (H2AK15Ub). Interacts with PWWP3A/EXPAND1. Interacts with CHEK2; modulates CHEK2 phosphorylation at 'Thr-68' in response to infrared. Interacts with MSL1; this interaction may be required for MSL1 DNA repair activity, but not for histone acetyltransferase activity. Interacts (when phosphorylated by ATM) with RIF1. Interacts (via the Tudor-like domain) with NUDT16L1/TIRR; interaction masks the Tudor-like domain and prevents recruitment to chromatin. Interacts with PAXIP1. Interacts with SHLD2. Interacts (when phosphorylated) with TOPBP1. Interacts with GFI1; promoting methylation by PRMT1. Interacts with (phosphorylated) DYNLL1; specifically binds DYNLL1 phosphorylated at 'Ser-88' and promotes its recruitment to double stand breaks (DSBs). As to quaternary structure, (Microbial infection) Interacts (via C-terminus) with Epstein-Barr virus lytic switch protein BZLF1 (via C-terminus); this interaction is involved in the activation of the viral lytic cycle. Post-translationally, asymmetrically dimethylated on Arg residues by PRMT1. Methylation is required for DNA binding. In terms of processing, phosphorylated at basal level in the absence of DNA damage. Phosphorylated by ATM in response to DNA damage: phosphorylation at different sites promotes interaction with different set of proteins: phosphorylation at the N-terminus by ATM (residues from 6-178) promotes interaction with PAXIP1 and non-homologous end joining (NHEJ) of dysfunctional telomeres. Phosphorylation by ATM at residues that are located more C-terminus (residues 300-650) leads to promote interaction with RIF1. Interaction with RIF1 leads to disrupt interaction with NUDT16L1/TIRR. Phosphorylation at Thr-1609 and Ser-1618 in the UDR motif blocks interaction with H2AK15ub. Dephosphorylated by PPP4C. Hyperphosphorylation during mitosis correlates with its exclusion from chromatin and DNA lesions. Hyperphosphorylated in an ATR-dependent manner in response to DNA damage induced by UV irradiation. Dephosphorylated by PPP5C. Phosphorylation at Ser-366 and Thr-670 promotes interaction with TOPBP1. Phosphorylated by VRK1. Monoubiquitinated at Lys-1685 by MSL2 is reponse to DNA damage, leading to its stabilization.

It is found in the nucleus. Its subcellular location is the chromosome. The protein resides in the centromere. The protein localises to the kinetochore. Its function is as follows. Double-strand break (DSB) repair protein involved in response to DNA damage, telomere dynamics and class-switch recombination (CSR) during antibody genesis. Plays a key role in the repair of double-strand DNA breaks (DSBs) in response to DNA damage by promoting non-homologous end joining (NHEJ)-mediated repair of DSBs and specifically counteracting the function of the homologous recombination (HR) repair protein BRCA1. In response to DSBs, phosphorylation by ATM promotes interaction with RIF1 and dissociation from NUDT16L1/TIRR, leading to recruitment to DSBs sites. Recruited to DSBs sites by recognizing and binding histone H2A monoubiquitinated at 'Lys-15' (H2AK15Ub) and histone H4 dimethylated at 'Lys-20' (H4K20me2), two histone marks that are present at DSBs sites. Required for immunoglobulin class-switch recombination (CSR) during antibody genesis, a process that involves the generation of DNA DSBs. Participates in the repair and the orientation of the broken DNA ends during CSR. In contrast, it is not required for classic NHEJ and V(D)J recombination. Promotes NHEJ of dysfunctional telomeres via interaction with PAXIP1. The sequence is that of TP53-binding protein 1 from Homo sapiens (Human).